Reading from the N-terminus, the 354-residue chain is Stimulator of interferon genes protein 3 (354 aa).

The next 4 helical transmembrane spans lie at 20–40 (VTFA…FALW), 48–68 (INFV…GELI), 101–121 (YGSC…YALL), and 132–152 (YGIF…IVGI). The 3',3'-cGAMP site is built by N178, Y183, R250, I251, K253, E272, S275, and N276.

It belongs to the STING family.

Its subcellular location is the membrane. Its function is as follows. Facilitator of innate immune signaling that acts as a sensor of second messenger signals produced by cyclic GMP-AMP synthase-like receptors (cGLRs) and promotes the production of type I interferon. Innate immune response is triggered in response to nucleotides from viruses and bacteria delivered to the cytoplasm. Acts by binding cyclic dinucleotides: recognizes and binds cyclic 3'-3' linked cGAMP (3'-3'-cGAMP), cyclic di-AMP (3',3'-c-di-AMP) and cyclic di-GMP (3',3'-c-di-GMP) second messengers produced by cGLRs in response to nucleotides in the cytosol, such as double-stranded RNA (dsRNA). Upon binding to 3'-3'-cGAMP, 3',3'-c-di-AMP or 3',3'-c-di-GMP, oligomerizes and promotes the recruitment and subsequent activation of the transcription factor IRF3 to induce expression of type I interferon. The chain is Stimulator of interferon genes protein 3 from Stylophora pistillata (Smooth cauliflower coral).